A 386-amino-acid polypeptide reads, in one-letter code: Formate-dependent phosphoribosylglycinamide formyltransferase (386 aa).

N(1)-(5-phospho-beta-D-ribosyl)glycinamide contacts are provided by residues 10–11 (EL) and Glu-70. Residues Arg-102, Lys-143, 148 to 153 (SSGKGQ), 183 to 186 (EAFV), and Glu-191 contribute to the ATP site. The ATP-grasp domain maps to 107 to 298 (DLAAKELGLK…EFELHLRAIL (192 aa)). Glu-256 and Glu-268 together coordinate Mg(2+). N(1)-(5-phospho-beta-D-ribosyl)glycinamide contacts are provided by residues Asp-275, Lys-346, and 353–354 (RR).

The protein belongs to the PurK/PurT family. As to quaternary structure, homodimer.

It carries out the reaction N(1)-(5-phospho-beta-D-ribosyl)glycinamide + formate + ATP = N(2)-formyl-N(1)-(5-phospho-beta-D-ribosyl)glycinamide + ADP + phosphate + H(+). It participates in purine metabolism; IMP biosynthesis via de novo pathway; N(2)-formyl-N(1)-(5-phospho-D-ribosyl)glycinamide from N(1)-(5-phospho-D-ribosyl)glycinamide (formate route): step 1/1. Its function is as follows. Involved in the de novo purine biosynthesis. Catalyzes the transfer of formate to 5-phospho-ribosyl-glycinamide (GAR), producing 5-phospho-ribosyl-N-formylglycinamide (FGAR). Formate is provided by PurU via hydrolysis of 10-formyl-tetrahydrofolate. This chain is Formate-dependent phosphoribosylglycinamide formyltransferase, found in Flavobacterium psychrophilum (strain ATCC 49511 / DSM 21280 / CIP 103535 / JIP02/86).